Here is a 222-residue protein sequence, read N- to C-terminus: Small ribosomal subunit protein uS3 (222 aa).

A KH type-2 domain is found at 39 to 108 (IRKFIKKELF…NVLINIVEVK (70 aa)).

The protein belongs to the universal ribosomal protein uS3 family. Part of the 30S ribosomal subunit. Forms a tight complex with proteins S10 and S14.

Its function is as follows. Binds the lower part of the 30S subunit head. Binds mRNA in the 70S ribosome, positioning it for translation. In Clostridium perfringens (strain ATCC 13124 / DSM 756 / JCM 1290 / NCIMB 6125 / NCTC 8237 / Type A), this protein is Small ribosomal subunit protein uS3.